The following is a 278-amino-acid chain: Large ribosomal subunit protein uL2 (278 aa).

2 disordered regions span residues 1–58 and 224–278; these read MAIR…GGGH and VVMN…GKKR. Residues 23–33 show a composition bias toward basic and acidic residues; the sequence is EITRDHPEKSL. Over residues 37–58 the composition is skewed to basic residues; it reads LHGRGGRNAHGRITTRHKGGGH. Positions 253-268 are enriched in basic and acidic residues; it reads PEGRTRKPKKASDKLI. The span at 269 to 278 shows a compositional bias: basic residues; it reads VRRRRTGKKR.

The protein belongs to the universal ribosomal protein uL2 family. As to quaternary structure, part of the 50S ribosomal subunit. Forms a bridge to the 30S subunit in the 70S ribosome.

Functionally, one of the primary rRNA binding proteins. Required for association of the 30S and 50S subunits to form the 70S ribosome, for tRNA binding and peptide bond formation. It has been suggested to have peptidyltransferase activity; this is somewhat controversial. Makes several contacts with the 16S rRNA in the 70S ribosome. The chain is Large ribosomal subunit protein uL2 from Mycolicibacterium vanbaalenii (strain DSM 7251 / JCM 13017 / BCRC 16820 / KCTC 9966 / NRRL B-24157 / PYR-1) (Mycobacterium vanbaalenii).